The chain runs to 512 residues: GMP synthase [glutamine-hydrolyzing] (512 aa).

One can recognise a Glutamine amidotransferase type-1 domain in the interval 3–196 (NILILDFGSQ…VKHICQTSET (194 aa)). The active-site Nucleophile is the Cys-80. Residues His-169 and Glu-171 contribute to the active site. In terms of domain architecture, GMPS ATP-PPase spans 197 to 387 (WKIETIEKQL…LGLPDVLISR (191 aa)). 225 to 231 (SGGVDSS) provides a ligand contact to ATP.

In terms of assembly, homodimer.

The enzyme catalyses XMP + L-glutamine + ATP + H2O = GMP + L-glutamate + AMP + diphosphate + 2 H(+). It participates in purine metabolism; GMP biosynthesis; GMP from XMP (L-Gln route): step 1/1. Functionally, catalyzes the synthesis of GMP from XMP. This chain is GMP synthase [glutamine-hydrolyzing] (guaA), found in Chlamydia muridarum (strain MoPn / Nigg).